The chain runs to 108 residues: Replication initiation control protein YabA (108 aa).

His83, Cys85, Cys99, and Cys102 together coordinate Zn(2+).

The protein belongs to the YabA family. In terms of assembly, homotetramer. Interacts with both DnaA and DnaN, acting as a bridge between these two proteins. Requires Zn(2+) as cofactor.

The protein resides in the cytoplasm. It localises to the nucleoid. Involved in control of chromosome replication initiation. Inhibits the cooperative binding of DnaA to the oriC region, thus negatively regulating initiation of chromosome replication. Inhibits the ability of DnaA-ATP to form a helix on DNA; does not disassemble preformed DnaA-DNA helices. Decreases the residence time of DnaA on the chromosome at its binding sites (oriC, replication forks and promoter-binding sites). Tethers DnaA to the replication machinery via the DNA polymerase beta sliding clamp subunit (dnaN). Associates with oriC and other DnaA targets on the chromosome in a DnaA-dependent manner. This chain is Replication initiation control protein YabA, found in Lactococcus lactis subsp. lactis (strain IL1403) (Streptococcus lactis).